Here is a 296-residue protein sequence, read N- to C-terminus: 4-hydroxy-tetrahydrodipicolinate synthase (296 aa).

T49 lines the pyruvate pocket. The Proton donor/acceptor role is filled by Y137. K165 (schiff-base intermediate with substrate) is an active-site residue. I207 lines the pyruvate pocket.

This sequence belongs to the DapA family. Homotetramer; dimer of dimers.

The protein resides in the cytoplasm. It carries out the reaction L-aspartate 4-semialdehyde + pyruvate = (2S,4S)-4-hydroxy-2,3,4,5-tetrahydrodipicolinate + H2O + H(+). Its pathway is amino-acid biosynthesis; L-lysine biosynthesis via DAP pathway; (S)-tetrahydrodipicolinate from L-aspartate: step 3/4. In terms of biological role, catalyzes the condensation of (S)-aspartate-beta-semialdehyde [(S)-ASA] and pyruvate to 4-hydroxy-tetrahydrodipicolinate (HTPA). This Bradyrhizobium diazoefficiens (strain JCM 10833 / BCRC 13528 / IAM 13628 / NBRC 14792 / USDA 110) protein is 4-hydroxy-tetrahydrodipicolinate synthase.